The sequence spans 82 residues: DNA-directed RNA polymerase subunit omega (82 aa).

This sequence belongs to the RNA polymerase subunit omega family. In terms of assembly, the RNAP catalytic core consists of 2 alpha, 1 beta, 1 beta' and 1 omega subunit. When a sigma factor is associated with the core the holoenzyme is formed, which can initiate transcription.

It catalyses the reaction RNA(n) + a ribonucleoside 5'-triphosphate = RNA(n+1) + diphosphate. Functionally, promotes RNA polymerase assembly. Latches the N- and C-terminal regions of the beta' subunit thereby facilitating its interaction with the beta and alpha subunits. The protein is DNA-directed RNA polymerase subunit omega of Lacticaseibacillus casei (strain BL23) (Lactobacillus casei).